Reading from the N-terminus, the 220-residue chain is Probable chemoreceptor glutamine deamidase CheD (220 aa).

This sequence belongs to the CheD family.

The catalysed reaction is L-glutaminyl-[protein] + H2O = L-glutamyl-[protein] + NH4(+). Its function is as follows. Probably deamidates glutamine residues to glutamate on methyl-accepting chemotaxis receptors (MCPs), playing an important role in chemotaxis. The polypeptide is Probable chemoreceptor glutamine deamidase CheD (Cupriavidus metallidurans (strain ATCC 43123 / DSM 2839 / NBRC 102507 / CH34) (Ralstonia metallidurans)).